The chain runs to 578 residues: Monooxygenase cfoE (578 aa).

A helical membrane pass occupies residues 549 to 569 (IVLSGVPLVVFGSLHLVLWIF).

The protein belongs to the FMO family. FAD is required as a cofactor.

Its subcellular location is the membrane. It functions in the pathway secondary metabolite biosynthesis; flavonoid biosynthesis. In terms of biological role, monooxygenase; part of the gene cluster that mediates the biosynthesis of chlorflavonin, a fungal flavonoid with acetolactate synthase inhibitory activity. Within the pathway, cfoE is responsible for the chlorination of the flavonoid skeleton at position C3'. The pathway begins with the PKS-NRPS hybrid synthetase cfoA that uses benzoic acid or p-hydroxybenzoic acid as a starter unit with four rounds of chain elongation using malonyl-CoA to form the chalcone skeleton. Then, a new type of chalcone isomerase, cfoK, catalyzes the conversion of the chalcone into a flavanone by a histidine-mediated oxa-Michael addition mechanism. The desaturation of flavanone to flavone is catalyzed by a new type of flavone synthase, the flavin mononucleotide (FMN)-dependent oxidoreductase cfoJ. Monooxygenases cfoF, cfoG, and P450 cfoH are responsible for the hydroxylation of the flavonoid skeleton at sites C3, C8, and C2', respectively. Like cfoF, the dehydratase cfoI plays also a role in the hydroxylation of position C3. Methyltransferases cfoB, cfoC, and cfoD then catalyze the methylation of C7-OH, C8-OH, and C3-OH, respectively. Finally, the monooxygenase cfoE is responsible for the chlorination of flavonoid at position C3'. In Aspergillus candidus, this protein is Monooxygenase cfoE.